The chain runs to 294 residues: Eukaryotic translation initiation factor 3 subunit G (294 aa).

Disordered stretches follow at residues 1 to 43 (MPSA…ENKI) and 160 to 211 (EDDG…RDET). The segment covering 194–211 (GANRRGETMPSRSQRDET) has biased composition (basic and acidic residues). The region spanning 212 to 290 (ATIRVTNLSE…LILNVEWAKP (79 aa)) is the RRM domain.

It belongs to the eIF-3 subunit G family. In terms of assembly, component of the eukaryotic translation initiation factor 3 (eIF-3) complex.

Its subcellular location is the cytoplasm. Its function is as follows. RNA-binding component of the eukaryotic translation initiation factor 3 (eIF-3) complex, which is involved in protein synthesis of a specialized repertoire of mRNAs and, together with other initiation factors, stimulates binding of mRNA and methionyl-tRNAi to the 40S ribosome. The eIF-3 complex specifically targets and initiates translation of a subset of mRNAs involved in cell proliferation. This subunit can bind 18S rRNA. The polypeptide is Eukaryotic translation initiation factor 3 subunit G (Nematostella vectensis (Starlet sea anemone)).